A 364-amino-acid chain; its full sequence is Leucine-rich repeat-containing protein 19 (364 aa).

The first 20 residues, 1–20 (MKVTRFMFWLFSMLLPSVKS), serve as a signal peptide directing secretion. Topologically, residues 21 to 264 (QASETEVPCN…SEHEPLGKSW (244 aa)) are extracellular. Asn-30, Asn-35, Asn-46, and Asn-88 each carry an N-linked (GlcNAc...) asparagine glycan. 6 LRR repeats span residues 44-69 (STNVTILDLSYNRITLNAADSRVLQM), 70-93 (YSLLTELYLMENNIIALYNSSFRN), 94-117 (LLNLEILNICGNSISVIQQGSFVG), 118-141 (LNELKQLFLCQNKILQLNPDTFVP), 143-163 (NNLKVLNLQGNLIRLFDAPQL), and 164-190 (PHLEILTLDGNPWNCTCGLLELHNWLN). Residues 174-225 (NPWNCTCGLLELHNWLNTSNVTLENENMTMCSYPDELKHDSIKSAPFTTECH) enclose the LRRCT domain. N-linked (GlcNAc...) asparagine glycosylation is found at Asn-177, Asn-190, Asn-193, Asn-200, Asn-241, Asn-245, and Asn-250. A helical transmembrane segment spans residues 265–285 (AFLVGVVATVLLTSLLIFIAI). At 286 to 364 (KCPVWYNILL…IDINEVHEEK (79 aa)) the chain is on the cytoplasmic side.

As to quaternary structure, interacts with TRAF2 and TRAF6. In terms of tissue distribution, strongly expressed in kidney, also expressed in spleen, intestine and colon. Highly expressed in epithelial cells. In kidney, mainly expressed in renal collecting duct epithelial cells.

The protein localises to the membrane. Its activity is regulated as follows. Activated by TLR ligands such as LPS, bacterial DNA and peptidoglycan. In terms of biological role, pathogen-recognition receptor which mediates the activation of TRAF2- and TRAF6 NF-kappa-B signaling pathways and induces the expression of pro-inflammatory cytokines. In kidney, prevents infection by uropathogenic bacteria by inducing the production of cytokines, chemokines and antimicrobial substances. In gut, involved in host-microbiota interactions, plays a critical role in promoting the recruitment of immune cells and intestinal inflammation. This is Leucine-rich repeat-containing protein 19 from Mus musculus (Mouse).